Reading from the N-terminus, the 120-residue chain is Large ribosomal subunit protein uL18 (120 aa).

This sequence belongs to the universal ribosomal protein uL18 family. As to quaternary structure, part of the 50S ribosomal subunit; part of the 5S rRNA/L5/L18/L25 subcomplex. Contacts the 5S and 23S rRNAs.

Functionally, this is one of the proteins that bind and probably mediate the attachment of the 5S RNA into the large ribosomal subunit, where it forms part of the central protuberance. The sequence is that of Large ribosomal subunit protein uL18 from Rhodopseudomonas palustris (strain HaA2).